The following is a 590-amino-acid chain: 2-isopropylmalate synthase (590 aa).

The region spanning P40–D314 is the Pyruvate carboxyltransferase domain. Mg(2+)-binding residues include D49, H253, H255, and N289. A regulatory domain region spans residues A456 to V590.

Belongs to the alpha-IPM synthase/homocitrate synthase family. LeuA type 2 subfamily. Homodimer. It depends on Mg(2+) as a cofactor.

The protein resides in the cytoplasm. It carries out the reaction 3-methyl-2-oxobutanoate + acetyl-CoA + H2O = (2S)-2-isopropylmalate + CoA + H(+). It functions in the pathway amino-acid biosynthesis; L-leucine biosynthesis; L-leucine from 3-methyl-2-oxobutanoate: step 1/4. In terms of biological role, catalyzes the condensation of the acetyl group of acetyl-CoA with 3-methyl-2-oxobutanoate (2-ketoisovalerate) to form 3-carboxy-3-hydroxy-4-methylpentanoate (2-isopropylmalate). This Leifsonia xyli subsp. xyli (strain CTCB07) protein is 2-isopropylmalate synthase.